The primary structure comprises 109 residues: Homeobox protein E30 (109 aa).

Over residues 1 to 12 (GPRTRRVKRSHN) the composition is skewed to basic residues. The tract at residues 1-27 (GPRTRRVKRSHNGKNGSPEEKRPRTAF) is disordered. A DNA-binding region (homeobox) is located at residues 20–79 (EKRPRTAFSAEQLARLKREFAENRYLTERRRQQLSRDLGLTEAQIKIWFQNKRAKIKKAS).

This sequence belongs to the engrailed homeobox family.

The protein localises to the nucleus. In Apis mellifera (Honeybee), this protein is Homeobox protein E30.